Reading from the N-terminus, the 201-residue chain is Large ribosomal subunit protein uL4 (201 aa).

Residues 45-73 (AQKTRAEVTGSGKKPWRQKGTGRARAGSV) form a disordered region.

The protein belongs to the universal ribosomal protein uL4 family. Part of the 50S ribosomal subunit.

One of the primary rRNA binding proteins, this protein initially binds near the 5'-end of the 23S rRNA. It is important during the early stages of 50S assembly. It makes multiple contacts with different domains of the 23S rRNA in the assembled 50S subunit and ribosome. Its function is as follows. Forms part of the polypeptide exit tunnel. In Yersinia pseudotuberculosis serotype O:1b (strain IP 31758), this protein is Large ribosomal subunit protein uL4.